The following is a 126-amino-acid chain: Glycine cleavage system H protein (126 aa).

The Lipoyl-binding domain maps to Thr-21–Lys-103. Position 62 is an N6-lipoyllysine (Lys-62).

The protein belongs to the GcvH family. As to quaternary structure, the glycine cleavage system is composed of four proteins: P, T, L and H. The cofactor is (R)-lipoate.

Functionally, the glycine cleavage system catalyzes the degradation of glycine. The H protein shuttles the methylamine group of glycine from the P protein to the T protein. In Vibrio vulnificus (strain CMCP6), this protein is Glycine cleavage system H protein.